A 265-amino-acid polypeptide reads, in one-letter code: Dehydrin COR47 (265 aa).

The segment covering 1 to 14 has biased composition (basic and acidic residues); it reads MAEEYKNNVPEHET. The segment at 1–265 is disordered; the sequence is MAEEYKNNVP…EVKKEKESDD (265 aa). Position 2 is an N-acetylalanine (A2). The segment covering 16-28 has biased composition (polar residues); the sequence is TVATEESPATTTE. A compositionally biased stretch (basic and acidic residues) spans 29 to 47; that stretch reads VTDRGLFDFLGKKEEEVKP. S64 is subject to Phosphoserine. Residues 69-79 show a composition bias toward basic and acidic residues; that stretch reads AAEHEEVKENK. At T90 the chain carries Phosphothreonine. Composition is skewed to basic and acidic residues over residues 96 to 105 and 129 to 156; these read NKPSVIEKLH and IVEG…KTAE. Repeat unit 1 spans residues 133-153; it reads EEDKKGLVEKIKEKLPGHHDK. The interval 133 to 251 is 3 X 21 AA repeats, Lys-rich; it reads EEDKKGLVEK…KEKLPGYHAK (119 aa). Residues 160–172 are compositionally biased toward low complexity; that stretch reads PVSTTIPVPVSES. Basic and acidic residues-rich tracts occupy residues 173–204 and 227–265; these read VVEH…KAED and PVEH…ESDD. 2 repeat units span residues 180 to 200 and 231 to 251.

This sequence belongs to the plant dehydrin family.

The sequence is that of Dehydrin COR47 (COR47) from Arabidopsis thaliana (Mouse-ear cress).